Consider the following 437-residue polypeptide: MRLSRSLIPTLKETPAEAQIVSHRLMLRAGLIRQQSAGIYAWLPAGLRVLHNIANIVREEQARAGSQEILMPTIQSAELWRESGRYDAYGPEMLRIRDRHDREMLYGPTNEEMLTAIMRDSVQSYRDLPQMLYQIQWKFRDEVRPRFGVLRGREFYMKDGYSFDLDYEGAVESYRRMMLAYMRTFKRMGVRAVPMRADTGPIGGNLSHEFHILAPTGESGVFYDSSFETIELGDDAYDYEARADLDAFFDRMTSLYAATDEKHDEAAWAKVPEDRRREGRGIEVGQIFYFGTKYSQAMNFTVVGPDGARLHPEMGSYGIGVSRLTGAIIEASHDEAGIIWPDAIAPFRASILNLRQGDQVTDALCERIYDALGRDALYDDREARAGEKFADADLMGHPWQVIVGPRGAAKGQVELKHRRTGERAELDIESALAKVRV.

Belongs to the class-II aminoacyl-tRNA synthetase family. ProS type 2 subfamily. In terms of assembly, homodimer.

The protein resides in the cytoplasm. The catalysed reaction is tRNA(Pro) + L-proline + ATP = L-prolyl-tRNA(Pro) + AMP + diphosphate. Functionally, catalyzes the attachment of proline to tRNA(Pro) in a two-step reaction: proline is first activated by ATP to form Pro-AMP and then transferred to the acceptor end of tRNA(Pro). This Acidiphilium cryptum (strain JF-5) protein is Proline--tRNA ligase.